The primary structure comprises 911 residues: Desmoglein-1-gamma (911 aa).

An N-terminal signal peptide occupies residues 1 to 23; that stretch reads MDWHSFRIAALLLTSLVVLEVNS. The propeptide occupies 24–49; sequence EFQIQVRDHNAKNGTIKWHSIRRQKR. 3 Cadherin domains span residues 50–157, 158–269, and 270–389; these read EWIK…PPVF, SMTT…IPYL, and EQSS…QPGS. At 50-519 the chain is on the extracellular side; it reads EWIKFAAACR…PNVDNVHFGP (470 aa). N-linked (GlcNAc...) (high mannose) asparagine glycosylation occurs at N110. N180 carries an N-linked (GlcNAc...) asparagine glycan. N401 is a glycosylation site (N-linked (GlcNAc...) asparagine). The helical transmembrane segment at 520–540 threads the bilayer; that stretch reads AGIGLLIMGFLVLGLVPFLLI. The Cytoplasmic portion of the chain corresponds to 541 to 911; it reads SCDCGGAPGG…GMIGNLSIPP (371 aa). Desmoglein repeat repeat units lie at residues 783–809, 810–839, 840–869, and 870–897; these read AYPSGPGVQHPMLIPDPLGYGNITVRE, SYTTSGTLKPSVHFHDNQQASNVVVTERVV, GPISGADLHGMLEIPALRDGTNVIVTERVI, and APGSSLPNSLTIPNPRETSNVVVTERVI. A Desmoglein repeat 5; truncated repeat occupies 898–911; that stretch reads QPTSGMIGNLSIPP.

As to quaternary structure, interacts with DSC3; there is evidence to suggest that the interaction promotes cell-cell adhesion of keratinocytes. In terms of tissue distribution, expressed in epidermis, brain, liver, skeletal, muscle and testis.

It is found in the cell membrane. The protein resides in the cell junction. It localises to the desmosome. The protein localises to the cytoplasm. Its subcellular location is the nucleus. In terms of biological role, component of intercellular desmosome junctions. Involved in the interaction of plaque proteins and intermediate filaments mediating cell-cell adhesion. This is Desmoglein-1-gamma (Dsg1c) from Mus musculus (Mouse).